Reading from the N-terminus, the 378-residue chain is tRNA-specific 2-thiouridylase MnmA (378 aa).

ATP contacts are provided by residues Gly-9–Ser-16 and Met-35. Residues Asn-94–Asp-96 are interaction with target base in tRNA. The active-site Nucleophile is the Cys-99. A disulfide bridge connects residues Cys-99 and Cys-195. An ATP-binding site is contributed by Gly-123. Residues Lys-145–Gln-147 form an interaction with tRNA region. Cys-195 acts as the Cysteine persulfide intermediate in catalysis. The tract at residues Arg-307 to Tyr-308 is interaction with tRNA.

The protein belongs to the MnmA/TRMU family.

Its subcellular location is the cytoplasm. It catalyses the reaction S-sulfanyl-L-cysteinyl-[protein] + uridine(34) in tRNA + AH2 + ATP = 2-thiouridine(34) in tRNA + L-cysteinyl-[protein] + A + AMP + diphosphate + H(+). Catalyzes the 2-thiolation of uridine at the wobble position (U34) of tRNA, leading to the formation of s(2)U34. This is tRNA-specific 2-thiouridylase MnmA from Xanthomonas campestris pv. campestris (strain 8004).